The sequence spans 337 residues: Putative F-box protein At4g09870 (337 aa).

The F-box domain occupies 1–46 (MSISELSQDLLEEILCRVPAISLKKLRSTCKLWNSLFIDKRVRNEL).

The protein is Putative F-box protein At4g09870 of Arabidopsis thaliana (Mouse-ear cress).